Here is a 170-residue protein sequence, read N- to C-terminus: Cathelicidin antimicrobial peptide (170 aa).

Residues 1 to 30 (MKTQRDSPSLGRWSLVLLLLGLVMPLAIVA) form the signal peptide. The propeptide at 31–131 (QVLSYQEAVL…DISCDKDNRR (101 aa)) is cathelin-like domain (CLD). 2 disulfide bridges follow: cysteine 86–cysteine 97 and cysteine 108–cysteine 125. An active core region spans residues 150–162 (FKRIVQRIKDFLQ).

It belongs to the cathelicidin family. As to quaternary structure, monomer, homodimer or homotrimer (in vitro). Oligomerizes as tetra- or hexamer in solution (in vitro). Post-translationally, proteolytically cleaved by proteinase PRTN3 into antibacterial peptide LL-37. Proteolytically cleaved by cathepsin CTSG and neutrophil elastase ELANE. Resistant to proteolytic degradation in solution, and when bound to both zwitterionic (mimicking mammalian membranes) and negatively charged membranes (mimicking bacterial membranes). In terms of processing, after secretion onto the skin surface, the CAMP gene product is processed by a serine protease-dependent mechanism into multiple novel antimicrobial peptides distinct from and shorter than cathelicidin LL-37. These peptides show enhanced antimicrobial action, acquiring the ability to kill skin pathogens such as S.aureus, E.coli and C.albicans. These peptides have lost the ability to stimulate CXCL8/IL8 release from keratinocytes. The peptides act synergistically, killing bacteria at lower concentrations when present together, and maintain activity at increased salt condition.

The protein resides in the secreted. It is found in the vesicle. In terms of biological role, antimicrobial protein that is an integral component of the innate immune system. Binds to bacterial lipopolysaccharides (LPS). Acts via neutrophil N-formyl peptide receptors to enhance the release of CXCL2. Postsecretory processing generates multiple cathelicidin antimicrobial peptides with various lengths which act as a topical antimicrobial defense in sweat on skin. The unprocessed precursor form, cathelicidin antimicrobial peptide, inhibits the growth of Gram-negative E.coli and E.aerogenes with efficiencies comparable to that of the mature peptide LL-37 (in vitro). Antimicrobial peptide that is an integral component of the innate immune system. Binds to bacterial lipopolysaccharides (LPS). Causes membrane permeabilization by forming transmembrane pores (in vitro). Causes lysis of E.coli. Exhibits antimicrobial activity against Gram-negative bacteria such as P.aeruginosa, S.typhimurium, E.aerogenes, E.coli and P.syringae, Gram-positive bacteria such as L.monocytogenes, S.epidermidis, S.pyogenes and S.aureus, as well as vancomycin-resistant enterococci (in vitro). Exhibits antimicrobial activity against methicillin-resistant S.aureus, P.mirabilis, and C.albicans in low-salt media, but not in media containing 100 mM NaCl (in vitro). Forms chiral supramolecular assemblies with quinolone signal (PQS) molecules of P.aeruginosa, which may lead to interference of bacterial quorum signaling and perturbance of bacterial biofilm formation. May form supramolecular fiber-like assemblies on bacterial membranes. Induces cytokine and chemokine producation as well as TNF/TNFA and CSF2/GMCSF production in normal human keratinocytes. Exhibits hemolytic activity against red blood cells. Its function is as follows. Exhibits antimicrobial activity against E.coli and B.megaterium (in vitro). The polypeptide is Cathelicidin antimicrobial peptide (Nomascus concolor (Black crested gibbon)).